We begin with the raw amino-acid sequence, 147 residues long: MVAQRVFWAAKTLQEMSPDEFESLCDGCGKCCLHKLEDEDTGDVYYTNVACRHLDHDRCRCTRYDQRQQLVAECVVLTPDSVRDTYWLPETCAYRLVDQGLPLFDWHPLISGDPDSVHTAGMSVAGKVVAENTVALDDLEDYIVRWV.

The protein belongs to the UPF0260 family.

This is UPF0260 protein CJA_2436 from Cellvibrio japonicus (strain Ueda107) (Pseudomonas fluorescens subsp. cellulosa).